We begin with the raw amino-acid sequence, 166 residues long: Phospholipase A2 inhibitor (166 aa).

The first 19 residues, M1 to G19, serve as a signal peptide directing secretion. In terms of domain architecture, C-type lectin spans L46–E161. N61 and N122 each carry an N-linked (GlcNAc...) asparagine glycan. 2 cysteine pairs are disulfide-bonded: C83/C160 and C138/C152.

It belongs to the alpha-type phospholipase A2 inhibitor family. As to quaternary structure, homotrimer; non-covalently linked. As to expression, expressed by the liver.

It localises to the secreted. Its function is as follows. This phospholipase A2 inhibitor binds directly phospholipase A2 in the presence or absence of calcium. The sequence is that of Phospholipase A2 inhibitor from Bothrops alternatus (Urutu).